A 315-amino-acid chain; its full sequence is Ferrochelatase (315 aa).

Residues H193 and E273 each contribute to the Fe cation site.

Belongs to the ferrochelatase family.

It localises to the cytoplasm. The catalysed reaction is heme b + 2 H(+) = protoporphyrin IX + Fe(2+). It functions in the pathway porphyrin-containing compound metabolism; protoheme biosynthesis; protoheme from protoporphyrin-IX: step 1/1. Functionally, catalyzes the ferrous insertion into protoporphyrin IX. The sequence is that of Ferrochelatase from Wolbachia sp. subsp. Drosophila simulans (strain wRi).